The sequence spans 270 residues: Glutamate racemase (270 aa).

Substrate-binding positions include 7–8 (DS) and 39–40 (YG). Cys-70 functions as the Proton donor/acceptor in the catalytic mechanism. 71 to 72 (NT) provides a ligand contact to substrate. The Proton donor/acceptor role is filled by Cys-194. 195-196 (TH) provides a ligand contact to substrate.

Belongs to the aspartate/glutamate racemases family.

The enzyme catalyses L-glutamate = D-glutamate. The protein operates within cell wall biogenesis; peptidoglycan biosynthesis. Its function is as follows. Provides the (R)-glutamate required for cell wall biosynthesis. This Cereibacter sphaeroides (strain ATCC 17025 / ATH 2.4.3) (Rhodobacter sphaeroides) protein is Glutamate racemase.